A 341-amino-acid polypeptide reads, in one-letter code: Uroporphyrinogen decarboxylase (341 aa).

Residues 26-30 (RQAGR), Asp-75, Tyr-150, Ser-205, and His-318 each bind substrate.

It belongs to the uroporphyrinogen decarboxylase family. As to quaternary structure, homodimer.

The protein localises to the cytoplasm. The catalysed reaction is uroporphyrinogen III + 4 H(+) = coproporphyrinogen III + 4 CO2. The protein operates within porphyrin-containing compound metabolism; protoporphyrin-IX biosynthesis; coproporphyrinogen-III from 5-aminolevulinate: step 4/4. In terms of biological role, catalyzes the decarboxylation of four acetate groups of uroporphyrinogen-III to yield coproporphyrinogen-III. The sequence is that of Uroporphyrinogen decarboxylase from Thermus thermophilus (strain ATCC BAA-163 / DSM 7039 / HB27).